A 211-amino-acid polypeptide reads, in one-letter code: Probable endo-1,4-beta-xylanase 5 (211 aa).

Residues 1–16 (MKVTAAFASLLLTAFA) form the signal peptide. The GH11 domain occupies 19–210 (APEPVLVSRS…GAGSASVTIS (192 aa)). The active-site Nucleophile is Glu106. The Proton donor role is filled by Glu197.

This sequence belongs to the glycosyl hydrolase 11 (cellulase G) family.

It localises to the secreted. It catalyses the reaction Endohydrolysis of (1-&gt;4)-beta-D-xylosidic linkages in xylans.. It participates in glycan degradation; xylan degradation. Functionally, endo-1,4-beta-xylanase involved in the hydrolysis of xylan, a major structural heterogeneous polysaccharide found in plant biomass representing the second most abundant polysaccharide in the biosphere, after cellulose. This chain is Probable endo-1,4-beta-xylanase 5 (XYN5), found in Aspergillus niger (strain ATCC MYA-4892 / CBS 513.88 / FGSC A1513).